A 278-amino-acid chain; its full sequence is uncharacterized protein (278 aa).

The Cytoplasmic segment spans residues 1-34 (MAKTIKVIRKKDPKKKNLSDPLAKQKLVWKIGHV). The chain crosses the membrane as a helical span at residues 35–55 (LTLVFGLLFSITYFYHVLIFF). Over 56-129 (KYRSWKWLFL…DLLSSENFHT (74 aa)) the chain is Extracellular. Residues 130–150 (LLIACLWFFGGGKSFYKILPY) form a helical membrane-spanning segment. Over 151-180 (MILSYLHLTKMNYELNANKEEKIPLTPKDR) the chain is Cytoplasmic. A helical transmembrane segment spans residues 181 to 201 (KMLHLLAYSELLVILALTLDT). Over 202-205 (ILFK) the chain is Extracellular. Residues 206 to 222 (TGTSGFMLVIYVGIYWL) form a helical membrane-spanning segment. Residues 223–278 (RLNFSPYAQVAVLELLVKFEKYVPKKYRDKWQVIKNFIYMKMKEHEKRTEEVARYA) are Cytoplasmic-facing.

Its subcellular location is the cell membrane. This is an uncharacterized protein from Saccharomyces cerevisiae (strain ATCC 204508 / S288c) (Baker's yeast).